Consider the following 257-residue polypeptide: Adenosylcobinamide-GDP ribazoletransferase (257 aa).

6 helical membrane passes run 4–24 (AVRGLLLALAFLTRLPVWWLG), 40–60 (VVGLILGILLLALYALLQWFF), 64–84 (FVVQAALLVAAWALVTGLLHL), 116–136 (AAVAVITLALVVKVAALAALL), 140–160 (AALAALLIAPVLGRAAAALLI), and 193–213 (LFVTALAGWAGLAAVLGVVAV).

The protein belongs to the CobS family. The cofactor is Mg(2+).

The protein resides in the cell inner membrane. It catalyses the reaction alpha-ribazole + adenosylcob(III)inamide-GDP = adenosylcob(III)alamin + GMP + H(+). The catalysed reaction is alpha-ribazole 5'-phosphate + adenosylcob(III)inamide-GDP = adenosylcob(III)alamin 5'-phosphate + GMP + H(+). The protein operates within cofactor biosynthesis; adenosylcobalamin biosynthesis; adenosylcobalamin from cob(II)yrinate a,c-diamide: step 7/7. Functionally, joins adenosylcobinamide-GDP and alpha-ribazole to generate adenosylcobalamin (Ado-cobalamin). Also synthesizes adenosylcobalamin 5'-phosphate from adenosylcobinamide-GDP and alpha-ribazole 5'-phosphate. In Alkalilimnicola ehrlichii (strain ATCC BAA-1101 / DSM 17681 / MLHE-1), this protein is Adenosylcobinamide-GDP ribazoletransferase.